The sequence spans 391 residues: Nucleosome assembly protein 1-like 1 (391 aa).

Met-1 bears the N-acetylmethionine mark. Over residues 1 to 10 (MADIDNKEQS) the composition is skewed to basic and acidic residues. The segment at 1–32 (MADIDNKEQSELDQDLDDVEEVEEEETGEETK) is disordered. N-acetylalanine is present on Ala-2. Phosphoserine is present on Ser-10. Residues 11–28 (ELDQDLDDVEEVEEEETG) show a composition bias toward acidic residues. 2 positions are modified to phosphothreonine: Thr-62 and Thr-64. Position 69 is a phosphoserine (Ser-69). Lys-116 carries the post-translational modification N6-acetyllysine. The NAP1L motif motif lies at 125–150 (YEPTEEECEWKPDEEDEISEELKEKA). A compositionally biased stretch (acidic residues) spans 132–143 (CEWKPDEEDEIS). The interval 132–163 (CEWKPDEEDEISEELKEKAKIEDEKKDEEKED) is disordered. Phosphoserine is present on Ser-143. The segment covering 144–163 (EELKEKAKIEDEKKDEEKED) has biased composition (basic and acidic residues). Residues 273–279 (IKKKQKH) carry the Nuclear localization signal motif. The span at 346 to 376 (AIEDDDDDYDEEGEEADEEGEEEGDEENDPD) shows a compositional bias: acidic residues. The tract at residues 346–391 (AIEDDDDDYDEEGEEADEEGEEEGDEENDPDYDPKKDQNPAECKQQ) is disordered. The segment covering 377-391 (YDPKKDQNPAECKQQ) has biased composition (basic and acidic residues). The residue at position 388 (Cys-388) is a Cysteine methyl ester. The S-farnesyl cysteine moiety is linked to residue Cys-388. Positions 389 to 391 (KQQ) are cleaved as a propeptide — removed in mature form.

The protein belongs to the nucleosome assembly protein (NAP) family. As to quaternary structure, homodimer. The dimer binds strongly and sequentially to single and double H2A-H2B heterodimers. Interacts with ERCC6; this interaction increases ERCC6 processivity. Interacts with RAD54. Interacts with SETD1A. In terms of assembly, (Microbial infection) Interacts with human herpesvirus 8 protein LANA1 (via N-terminus); this interaction is required for LANA1-dependent DNA replication. (Microbial infection) Interacts with hepatitis virus protein NS5A (via C-terminus); this interaction sequesters NAP1L1 in the cytoplasm, blocking its nuclear translocation. As to quaternary structure, (Microbial infection) Interacts with Chikungunya virus non-structural protein 3 (via C-terminus). Monoglycylated on glutamate residues. Cannot be polyglycylated due to the absence of functional TTLL10 in human. In terms of processing, polyglutamylated by TTLL4 on glutamate residues, resulting in polyglutamate chains on the gamma-carboxyl group. Both polyglutamylation and monoglycylation modifications can coexist on the same protein on adjacent residues, and lowering polyglycylation levels increases polyglutamylation, and reciprocally. In terms of tissue distribution, ubiquitously expressed.

The protein localises to the nucleus. It localises to the melanosome. Its subcellular location is the cytoplasm. Its function is as follows. Histone chaperone that plays a role in the nuclear import of H2A-H2B and nucleosome assembly. Also participates in several important DNA repair mechanisms: greatly enhances ERCC6-mediated chromatin remodeling which is essential for transcription-coupled nucleotide excision DNA repair. Also stimulates homologous recombination (HR) by RAD51 and RAD54 which is essential in mitotic DNA double strand break (DSB) repair. Plays a key role in the regulation of embryonic neurogenesis. Promotes the proliferation of neural progenitors and inhibits neuronal differentiation during cortical development. Regulates neurogenesis via the modulation of RASSF10; regulates RASSF10 expression by promoting SETD1A-mediated H3K4 methylation at the RASSF10 promoter. Functionally, (Microbial infection) Positively regulates Epstein-Barr virus reactivation in epithelial cells through the induction of viral BZLF1 expression. In terms of biological role, (Microbial infection) Together with human herpesvirus 8 protein LANA1, assists the proper assembly of the nucleosome on the replicated viral DNA. In Homo sapiens (Human), this protein is Nucleosome assembly protein 1-like 1 (NAP1L1).